A 141-amino-acid polypeptide reads, in one-letter code: Hemoglobin subunit alpha (141 aa).

The 141-residue stretch at 1–141 (VLSPADKTNV…VSTVLTSKYR (141 aa)) folds into the Globin domain. Phosphoserine is present on Ser-3. Lys-7 bears the N6-succinyllysine mark. At Thr-8 the chain carries Phosphothreonine. Lys-11 is modified (N6-succinyllysine). Lys-16 is modified (N6-acetyllysine; alternate). Lys-16 carries the post-translational modification N6-succinyllysine; alternate. The residue at position 24 (Tyr-24) is a Phosphotyrosine. The residue at position 35 (Ser-35) is a Phosphoserine. N6-succinyllysine is present on Lys-40. The residue at position 49 (Ser-49) is a Phosphoserine. His-58 is a binding site for O2. His-87 lines the heme b pocket. Residue Ser-102 is modified to Phosphoserine. The residue at position 108 (Thr-108) is a Phosphothreonine. 2 positions are modified to phosphoserine: Ser-124 and Ser-131. A phosphothreonine mark is found at Thr-134 and Thr-137. Position 138 is a phosphoserine (Ser-138).

This sequence belongs to the globin family. As to quaternary structure, heterotetramer of two alpha chains and two beta chains. Red blood cells.

Functionally, involved in oxygen transport from the lung to the various peripheral tissues. This is Hemoglobin subunit alpha from Otospermophilus beecheyi (California ground squirrel).